The chain runs to 1403 residues: DNA-directed RNA polymerase subunit beta' (1403 aa).

The Zn(2+) site is built by C69, C71, C84, and C87. Residues D461, D463, and D465 each coordinate Mg(2+). Positions 818, 891, 898, and 901 each coordinate Zn(2+). Positions L1384 to E1403 are disordered. The span at G1391–E1403 shows a compositional bias: acidic residues.

It belongs to the RNA polymerase beta' chain family. The RNAP catalytic core consists of 2 alpha, 1 beta, 1 beta' and 1 omega subunit. When a sigma factor is associated with the core the holoenzyme is formed, which can initiate transcription. Mg(2+) serves as cofactor. The cofactor is Zn(2+).

It catalyses the reaction RNA(n) + a ribonucleoside 5'-triphosphate = RNA(n+1) + diphosphate. Functionally, DNA-dependent RNA polymerase catalyzes the transcription of DNA into RNA using the four ribonucleoside triphosphates as substrates. In Koribacter versatilis (strain Ellin345), this protein is DNA-directed RNA polymerase subunit beta'.